Here is a 207-residue protein sequence, read N- to C-terminus: Outer-membrane lipoprotein LolB (207 aa).

The first 21 residues, methionine 1–alanine 21, serve as a signal peptide directing secretion. Cysteine 22 carries the N-palmitoyl cysteine lipid modification. The S-diacylglycerol cysteine moiety is linked to residue cysteine 22.

This sequence belongs to the LolB family. As to quaternary structure, monomer.

The protein resides in the cell outer membrane. Functionally, plays a critical role in the incorporation of lipoproteins in the outer membrane after they are released by the LolA protein. The protein is Outer-membrane lipoprotein LolB of Salmonella schwarzengrund (strain CVM19633).